The chain runs to 156 residues: 6,7-dimethyl-8-ribityllumazine synthase (156 aa).

5-amino-6-(D-ribitylamino)uracil-binding positions include phenylalanine 23, 57-59, and 81-83; these read AFE and TVI. 86–87 is a (2S)-2-hydroxy-3-oxobutyl phosphate binding site; that stretch reads ST. Histidine 89 functions as the Proton donor in the catalytic mechanism. Phenylalanine 114 contributes to the 5-amino-6-(D-ribitylamino)uracil binding site. Arginine 128 contacts (2S)-2-hydroxy-3-oxobutyl phosphate.

It belongs to the DMRL synthase family. As to quaternary structure, forms an icosahedral capsid composed of 60 subunits, arranged as a dodecamer of pentamers.

It carries out the reaction (2S)-2-hydroxy-3-oxobutyl phosphate + 5-amino-6-(D-ribitylamino)uracil = 6,7-dimethyl-8-(1-D-ribityl)lumazine + phosphate + 2 H2O + H(+). The protein operates within cofactor biosynthesis; riboflavin biosynthesis; riboflavin from 2-hydroxy-3-oxobutyl phosphate and 5-amino-6-(D-ribitylamino)uracil: step 1/2. Catalyzes the formation of 6,7-dimethyl-8-ribityllumazine by condensation of 5-amino-6-(D-ribitylamino)uracil with 3,4-dihydroxy-2-butanone 4-phosphate. This is the penultimate step in the biosynthesis of riboflavin. The sequence is that of 6,7-dimethyl-8-ribityllumazine synthase from Shouchella clausii (strain KSM-K16) (Alkalihalobacillus clausii).